Consider the following 248-residue polypeptide: Meiotic drive suppressor wtf1 (248 aa).

The tract at residues 30-68 (LLPEYNSDEESTLPPYSDHARVSNPPNTHRENHSSGTTD) is disordered. The next 4 helical transmembrane spans lie at 73-93 (FLIK…PAVC), 110-130 (WTLI…SWYF), 152-172 (IPMA…PRVT), and 186-206 (SLAD…VETV).

The protein belongs to the WTF family. As to quaternary structure, homomer. Interacts with other proteins that exhibit high sequence similarity.

The protein resides in the spore membrane. The protein localises to the vacuole membrane. Acts as a suppressor component of the dual wtf meiotic drive system, and can suppress but not confer meiotic drive by compatible poisons. Wtf meiotic drive systems promote unequal transmission of alleles from the parental zygote to progeny spores by encoding a poison and an antidote from the same locus; the poison is trans-acting and forms toxic aggregates in all spores within an ascus, wherease the antidote is spore-specific and targets aggregates for degradation by the vacuole. Meiotic drive by wtf systems therefore lead to poisoning of all progeny that do not inherit the dual poison/antidote allele, or express a compatible antidote. The sequence is that of Meiotic drive suppressor wtf1 from Schizosaccharomyces pombe (Fission yeast).